Here is a 304-residue protein sequence, read N- to C-terminus: Putative integrase/recombinase HI_1414 (304 aa).

The Core-binding (CB) domain occupies 30–109; the sequence is TLFSDVIKRY…TIGHIFKIAL (80 aa). Positions 131–304 constitute a Tyr recombinase domain; the sequence is PRTQRVTEEN…DMAEVAELLD (174 aa). Catalysis depends on residues R174, K199, H256, R259, and H281. The active-site O-(3'-phospho-DNA)-tyrosine intermediate is the Y291.

The protein belongs to the 'phage' integrase family.

The polypeptide is Putative integrase/recombinase HI_1414 (Haemophilus influenzae (strain ATCC 51907 / DSM 11121 / KW20 / Rd)).